The sequence spans 204 residues: Transcriptional regulator GfcR (204 aa).

It belongs to the purine/pyrimidine phosphoribosyltransferase family. GfcR subfamily.

This is Transcriptional regulator GfcR from Methanosarcina mazei (strain ATCC BAA-159 / DSM 3647 / Goe1 / Go1 / JCM 11833 / OCM 88) (Methanosarcina frisia).